The primary structure comprises 480 residues: Glutamate--tRNA ligase (480 aa).

The 'HIGH' region motif lies at 12 to 22; the sequence is PSPTGAPHLGL. The 'KMSKS' region signature appears at 255–259; that stretch reads KLSKR. ATP is bound at residue K258.

Belongs to the class-I aminoacyl-tRNA synthetase family. Glutamate--tRNA ligase type 1 subfamily. Monomer.

It localises to the cytoplasm. It catalyses the reaction tRNA(Glu) + L-glutamate + ATP = L-glutamyl-tRNA(Glu) + AMP + diphosphate. Functionally, catalyzes the attachment of glutamate to tRNA(Glu) in a two-step reaction: glutamate is first activated by ATP to form Glu-AMP and then transferred to the acceptor end of tRNA(Glu). The protein is Glutamate--tRNA ligase of Tropheryma whipplei (strain TW08/27) (Whipple's bacillus).